Here is a 235-residue protein sequence, read N- to C-terminus: Ribosome maturation factor RimM (235 aa).

A compositionally biased stretch (basic and acidic residues) spans 1 to 19; sequence MKHEEANKEIGGRGAEGQR. The interval 1–49 is disordered; it reads MKHEEANKEIGGRGAEGQRSKRVGGNSKIQNIQSPAPNPQPIVPNTQSP. Residues 150–230 form the PRC barrel domain; the sequence is EDEYHVLDLI…RIEITPPPGL (81 aa).

It belongs to the RimM family. In terms of assembly, binds ribosomal protein uS19.

The protein resides in the cytoplasm. In terms of biological role, an accessory protein needed during the final step in the assembly of 30S ribosomal subunit, possibly for assembly of the head region. Essential for efficient processing of 16S rRNA. May be needed both before and after RbfA during the maturation of 16S rRNA. It has affinity for free ribosomal 30S subunits but not for 70S ribosomes. The sequence is that of Ribosome maturation factor RimM from Nostoc punctiforme (strain ATCC 29133 / PCC 73102).